The chain runs to 370 residues: Dihydroorotate dehydrogenase (quinone) (370 aa).

Residues 80–84 and Thr-104 contribute to the FMN site; that span reads AGFDK. Substrate is bound at residue Lys-84. 129-133 is a substrate binding site; that stretch reads NRMGF. Residues Asn-157 and Asn-190 each coordinate FMN. Residue Asn-190 participates in substrate binding. Ser-193 acts as the Nucleophile in catalysis. Asn-195 serves as a coordination point for substrate. 2 residues coordinate FMN: Lys-226 and Thr-254. Substrate is bound at residue 255–256; sequence NT. FMN-binding positions include Gly-278, Gly-307, and 328-329; that span reads YT.

Belongs to the dihydroorotate dehydrogenase family. Type 2 subfamily. In terms of assembly, monomer. FMN is required as a cofactor.

The protein localises to the cell membrane. It carries out the reaction (S)-dihydroorotate + a quinone = orotate + a quinol. The protein operates within pyrimidine metabolism; UMP biosynthesis via de novo pathway; orotate from (S)-dihydroorotate (quinone route): step 1/1. Catalyzes the conversion of dihydroorotate to orotate with quinone as electron acceptor. This Mycolicibacterium paratuberculosis (strain ATCC BAA-968 / K-10) (Mycobacterium paratuberculosis) protein is Dihydroorotate dehydrogenase (quinone).